A 280-amino-acid chain; its full sequence is Acyl-[acyl-carrier-protein]--UDP-N-acetylglucosamine O-acyltransferase (280 aa).

It belongs to the transferase hexapeptide repeat family. LpxA subfamily. As to quaternary structure, homotrimer.

The protein localises to the cytoplasm. The catalysed reaction is a (3R)-hydroxyacyl-[ACP] + UDP-N-acetyl-alpha-D-glucosamine = a UDP-3-O-[(3R)-3-hydroxyacyl]-N-acetyl-alpha-D-glucosamine + holo-[ACP]. It participates in glycolipid biosynthesis; lipid IV(A) biosynthesis; lipid IV(A) from (3R)-3-hydroxytetradecanoyl-[acyl-carrier-protein] and UDP-N-acetyl-alpha-D-glucosamine: step 1/6. Involved in the biosynthesis of lipid A, a phosphorylated glycolipid that anchors the lipopolysaccharide to the outer membrane of the cell. This is Acyl-[acyl-carrier-protein]--UDP-N-acetylglucosamine O-acyltransferase from Chlamydia muridarum (strain MoPn / Nigg).